The following is a 454-amino-acid chain: Mitochondrial dynamics protein MID49 (454 aa).

At 1–22 the chain is on the mitochondrial intermembrane side; it reads MAEFSQKQRKQSGSEGLGSVVD. A helical membrane pass occupies residues 23–43; it reads FLLANARLVLGVGGAAVLGIA. The Cytoplasmic segment spans residues 44–454; the sequence is TLAVKRLIDR…SGLQVPESLF (411 aa). A disordered region spans residues 76-113; it reads ATSPQKPQPPPAAFSQPLATGSPSPSVPVEPTPIHSPT.

The protein belongs to the MID49/MID51 family. Interacts with DNM1L.

Its subcellular location is the mitochondrion outer membrane. Functionally, mitochondrial outer membrane protein which regulates mitochondrial organization. It is required for mitochondrial fission and promotes the recruitment and association of the fission mediator dynamin-related protein 1 (DNM1L) to the mitochondrial surface independently of the mitochondrial fission FIS1 and MFF proteins. Regulates DNM1L GTPase activity. This chain is Mitochondrial dynamics protein MID49 (Mief2), found in Mus musculus (Mouse).